The sequence spans 478 residues: Endoglucanase 18 (478 aa).

A signal peptide spans 1–21 (MGKLLVVMLIGMFLAFESLEA). The N-linked (GlcNAc...) asparagine glycan is linked to Asn-29. Asp-76 serves as the catalytic Nucleophile. His-398 is an active-site residue. Residues 433-452 (HTGAIVGGPNSSDQYSDKRT) form a disordered region. Asn-442 carries an N-linked (GlcNAc...) asparagine glycan. Residues Asp-449 and Glu-458 contribute to the active site.

This sequence belongs to the glycosyl hydrolase 9 (cellulase E) family.

The protein resides in the secreted. It catalyses the reaction Endohydrolysis of (1-&gt;4)-beta-D-glucosidic linkages in cellulose, lichenin and cereal beta-D-glucans.. The protein is Endoglucanase 18 of Arabidopsis thaliana (Mouse-ear cress).